The primary structure comprises 508 residues: Maturase K (508 aa).

The protein belongs to the intron maturase 2 family. MatK subfamily.

It is found in the plastid. It localises to the chloroplast. Usually encoded in the trnK tRNA gene intron. Probably assists in splicing its own and other chloroplast group II introns. This is Maturase K from Chaetosphaeridium globosum (Charophycean green alga).